The primary structure comprises 122 residues: uncharacterized protein (122 aa).

The next 3 membrane-spanning stretches (helical) occupy residues 33-53, 58-78, and 97-117; these read ALGL…LTIP, VLGV…LLRW, and PGYL…LVVA.

The protein to E.coli YidH.

It is found in the cell membrane. This is an uncharacterized protein from Mycobacterium tuberculosis (strain CDC 1551 / Oshkosh).